A 1187-amino-acid polypeptide reads, in one-letter code: ATP-dependent DNA helicase MER3 (1187 aa).

Residues 1–41 (MKTKFDRLGTGKRSRPSPNNIDFNDQSATFKRNKKNSRQPS) are disordered. Over residues 16-30 (PSPNNIDFNDQSATF) the composition is skewed to polar residues. A Helicase ATP-binding domain is found at 148–322 (PSIYESNENC…WLKTNNELPA (175 aa)). 161–168 (SPTGSGKT) provides a ligand contact to ATP. The DEIH box signature appears at 268 to 271 (DEIH). A Helicase C-terminal domain is found at 360–542 (KLIEIIEKHA…NLIEHLAAET (183 aa)). Positions 616–922 (STAYGNAMTR…PKLEKIEFSI (307 aa)) constitute an SEC63 domain. The C4-type zinc finger occupies 1039–1054 (CFHSCKDKTQCRHLCC). Residues 1146–1187 (NCPEIIPIDLESSDSYSSNTAASSISDPNGDLDFLGSDIEFE) form a disordered region. Positions 1158–1171 (SDSYSSNTAASSIS) are enriched in low complexity.

Belongs to the helicase family. SKI2 subfamily. In terms of assembly, oligomerizes. A divalent metal cation is required as a cofactor. Zn(2+) serves as cofactor.

It is found in the nucleus. The catalysed reaction is Couples ATP hydrolysis with the unwinding of duplex DNA by translocating in the 3'-5' direction.. The enzyme catalyses ATP + H2O = ADP + phosphate + H(+). In terms of biological role, DNA-dependent ATPase and 3'-5' DNA helicase. Required in the control of double strand break transition and crossover during meiosis. ATPase is slightly better stimulated by single-stranded (ss) than double-stranded (ds)DNA. Unwinds Holliday junction (HJ) DNA to Y-DNA and to ssDNA. Efficient unwinding requires 6 nucleotides of 3'-ssDNA; seems to initiate unwinding from blunt ends when they open slightly. Binds HJ, dsDNA, ssDNA and 3'- and 5-overhang DNA. The sequence is that of ATP-dependent DNA helicase MER3 from Saccharomyces cerevisiae (strain ATCC 204508 / S288c) (Baker's yeast).